Consider the following 908-residue polypeptide: MRFATTQLATLACFILTAEATFPLRGLFNDAPVDVDLGVYHEESGNNKEQKVDGFNMSPNIKKRTNENNAANVVSTNGGLFITSTKELKTTVVVTSCFNNVCSETSITTPKTAVTATTSKHSTSKPTYTTTSKHSTSHSSTPASTSKHSTSTSTHPATSEHSTSKSTHATSSKHSTSKSSVSVTTSKHSTHDTTSKSFVTPPASSTTSEHTKHKSHKPSKTVVTLTSCSNNACSQSEITTGAIVVTDKETVYTTYCPLTDTETETESTTATTSKHSTHTTTSKHSSVESTSVTSSSKHSVSKSTDVTTSKHSSSESSHATTMKHSTSKHSTHATTSKHSTTESTSGITSKHSTHATSSKYSTVESSSSFASTSESSVPVSSSKSTTFESSISTTTSKHLTLKSSTPASTLEYSTSIPPAPATTSNSLSTKSTTLTTISRSSTSGSSVPNTTRESSTSTTTPNSSSSESKVSSAIPKYSSSEVSSSATTLKSYSTTHSIPTTLVYSSSTSLGFSVTEFRNLTTTSKSSLSTSTTELLTSGTTVRSSTSESSVTSATSIYTSSESTTSSESTTSIETPKSIASKSSSSVTLPKSSTFAWSTSTTTPESSPITLKLSTSKPPKPSATMESSASTTKNSSIQSTSEATTSGSSGVESSVLTATTKSSVPVTTSEWSSVVTTPKSSAPNTTLEHSTSASETSSGSVYTTFDQSTTVITVTSCSDNLCSKTEVTTGVTVITSDTTSYTTYCPLTGTTTVSSALESLVTANKSTSYVGATPIVSSVVSTTPIISSASTTPIISSASTTSVISSASTTSVISNAISNPVSTDVKPTTSSQGTKSTPVDTDSKSTSETTVMVYTTKSVTPTTVESISVAVSSAAQSSIAAISSYEGTGNNMKLSFGVVIAGVAAFAI.

Residues 1-20 (MRFATTQLATLACFILTAEA) form the signal peptide. Low complexity-rich tracts occupy residues 110–187 (PKTA…TTSK), 266–324 (ESTT…TMKH), and 332–405 (HATT…KSST). 2 disordered regions span residues 110–221 (PKTA…PSKT) and 263–477 (TETE…IPKY). The span at 406–416 (PASTLEYSTSI) shows a compositional bias: polar residues. The span at 422–477 (TTSNSLSTKSTTLTTISRSSTSGSSVPNTTRESSTSTTTPNSSSSESKVSSAIPKY) shows a compositional bias: low complexity. 3 N-linked (GlcNAc...) asparagine glycosylation sites follow: N449, N462, and N519. Residues 539 to 608 (GTTVRSSTSE…TSTTTPESSP (70 aa)) are compositionally biased toward low complexity. A disordered region spans residues 539 to 700 (GTTVRSSTSE…TSASETSSGS (162 aa)). Over residues 624-638 (TMESSASTTKNSSIQ) the composition is skewed to polar residues. N-linked (GlcNAc...) asparagine glycosylation occurs at N634. 2 stretches are compositionally biased toward low complexity: residues 639–655 (STSE…ESSV) and 662–677 (SSVP…VVTT). The N-linked (GlcNAc...) asparagine glycan is linked to N684. Positions 685 to 700 (TTLEHSTSASETSSGS) are enriched in low complexity. N764 is a glycosylation site (N-linked (GlcNAc...) asparagine). A disordered region spans residues 821–844 (VSTDVKPTTSSQGTKSTPVDTDSK). G887 carries GPI-anchor amidated glycine lipidation. A propeptide spans 888–908 (TGNNMKLSFGVVIAGVAAFAI) (removed in mature form).

The GPI-anchor is attached to the protein in the endoplasmic reticulum and serves to target the protein to the cell surface. There, the glucosamine-inositol phospholipid moiety is cleaved off and the GPI-modified mannoprotein is covalently attached via its lipidless GPI glycan remnant to the 1,6-beta-glucan of the outer cell wall layer.

The protein resides in the secreted. The protein localises to the cell wall. It localises to the membrane. GPI-anchored cell wall protein required for mating efficiency, biofilm formation, adhesion, filamentous growth, and oxidative stress tolerance. Involved in normal disseminated infection in a mouse systemic candidiasis model. This chain is Hyphal wall protein 2 (HWP2), found in Candida albicans (strain SC5314 / ATCC MYA-2876) (Yeast).